The following is a 150-amino-acid chain: MATSLLSPLLVAMLGFLLHVHVARAGLEHTCTLETRMQGAHPQGICGSKLPDIVHTVCQVMGRGYAGGQRQLRKRTSMIDSDDMEAEGGSRGGFLMSKRRALSYLQKETNPLVMAGYERRGIQKRHGEQGITCECCYNHCSFRELVQYCN.

Positions 1 to 25 (MATSLLSPLLVAMLGFLLHVHVARA) are cleaved as a signal peptide. 4 cysteine pairs are disulfide-bonded: C31–C133, C46–C136, C58–C149, and C135–C140. A propeptide spans 64–111 (GYAGGQRQLRKRTSMIDSDDMEAEGGSRGGFLMSKRRALSYLQKETNP) (c peptide). Position 144 is a 4-carboxyglutamate; partial (E144).

Belongs to the insulin family. In terms of assembly, heterodimer of A and B chains; disulfide-linked. In terms of tissue distribution, expressed by the venom gland.

The protein resides in the secreted. In terms of biological role, this venom insulin facilitates prey capture by rapidly inducing hypoglycemic shock. Intraperitoneal injection of this peptide into zebrafish lowers blood glucose with the same potency than human insulin. In vivo, when applied to water, this peptide reduces overall locomotor activity of zebrafish larvae, observed as a significant decrease in the percentage of time spent swimming and movement frequency. In Conus imperialis (Imperial cone), this protein is Con-Ins Im1.